Reading from the N-terminus, the 554-residue chain is MFCIQCEQTIRTPAGNGCSYSQGMCGKLAATSDLQDLLIYMLQGVSVYAVKAREQGIIDAEIDSFVPKAFFSTLTNVNFDDERIMAYAQQAAHYRAQLKASYEAACEQAGIAVEQVPQVAQLVLGTSKIEMLAQAPIALLNKDKHDVHEDIMGLRLLCLYGLKGAAAYMEHARVLGQTDADVAGRFHEIMSFLGEPSVDGDKLFTTAMDIGQLNYRIMAMLDAGETQAFGHPEPTVVNTKSVKGKAILVSGHDMKDLELILEQTVGKGINVFTHGEMLPALAYPAFKKYPHLVGNYGSAWQNQQQEFANFPGAVVMTSNCIIDPNVGSYSDRIFTRSIVGWPGVVHIEGDDFSAVIDKALALEGFIYDEIPHTITIGFARNALMAAAPAVVENVKSGAIKHFFLVGGCDGDKADRSYFTELAKSTPKDSLILTLGCGKYKFNKLEFGDINGIPRLLDVGQCNDAYSAIQLAIALAEVFECDINELPLSLVLSWFEQKAIVVLLTLLSLGVKNIRTGPTPPAFLTANLAKILEEKFGLRNTTTVEADLKTMLNVA.

[2Fe-2S] cluster-binding residues include Cys3, Cys6, Cys18, and Cys25. His252, Glu276, Cys320, Cys408, Cys436, Cys461, Glu495, and Lys497 together coordinate hybrid [4Fe-2O-2S] cluster. Cys408 carries the cysteine persulfide modification.

The protein belongs to the HCP family. [2Fe-2S] cluster serves as cofactor. It depends on hybrid [4Fe-2O-2S] cluster as a cofactor.

Its subcellular location is the cytoplasm. The enzyme catalyses A + NH4(+) + H2O = hydroxylamine + AH2 + H(+). Its function is as follows. Catalyzes the reduction of hydroxylamine to form NH(3) and H(2)O. The chain is Hydroxylamine reductase from Shewanella baltica (strain OS185).